The chain runs to 425 residues: MPDNNLEILFQHDPAMAEIIQGELQRQRDHLELIASENFTSEAVLAAQGSVLTNKYAEGLPKKRYYGGCEYIDRAEQLAIDRAKELFGAAHANVQPHSGAQANFAVFLALLSPGDTIMGMDLSHGGHLTHGSPVNVSGKWFKVCHYGVNPDTERLDYDQIRELALKERPKLLICGYSAYPRIIEFDKFRAIADEIGAYLMADIAHIAGLVATGHHPSPISYCDVVTTTTHKTLRGPRGGLILTRDADLGKQFDKAVFPGTQGGPLEHVIAAKGVAFGEALKPQFKAYSGQVIANSRALAAQLMERGFKLVSGGTDNHLMLVDLRSIGMTGKEADRLVSEINITANKNTVPFDPESPFVTSGLRLGSPALTTRGMGESEFKEIGNIIADYLLSRGDEAVKHDCLGRVKSLCDRFPLYPGMKMAALV.

(6S)-5,6,7,8-tetrahydrofolate is bound by residues Leu-122 and 126-128; that span reads GHL. Lys-231 carries the post-translational modification N6-(pyridoxal phosphate)lysine. Residue 355-357 coordinates (6S)-5,6,7,8-tetrahydrofolate; the sequence is SPF.

Belongs to the SHMT family. As to quaternary structure, homodimer. Pyridoxal 5'-phosphate serves as cofactor.

It localises to the cytoplasm. The catalysed reaction is (6R)-5,10-methylene-5,6,7,8-tetrahydrofolate + glycine + H2O = (6S)-5,6,7,8-tetrahydrofolate + L-serine. It participates in one-carbon metabolism; tetrahydrofolate interconversion. Its pathway is amino-acid biosynthesis; glycine biosynthesis; glycine from L-serine: step 1/1. Its function is as follows. Catalyzes the reversible interconversion of serine and glycine with tetrahydrofolate (THF) serving as the one-carbon carrier. This reaction serves as the major source of one-carbon groups required for the biosynthesis of purines, thymidylate, methionine, and other important biomolecules. Also exhibits THF-independent aldolase activity toward beta-hydroxyamino acids, producing glycine and aldehydes, via a retro-aldol mechanism. This Rippkaea orientalis (strain PCC 8801 / RF-1) (Cyanothece sp. (strain PCC 8801)) protein is Serine hydroxymethyltransferase.